The following is a 167-amino-acid chain: MIYVDNRQNKVEASEKLIERLTEVIEFALKEEEVNMKCEISLLFVDNNEIKEINNETRGINRETDVLSFPMLEYEDKKVFKDMYKDYKFSQSDFDGDELVLGDIVLSLEKALEQSKEFNHSYEREASYLVVHSVLHLLGYDHMEDDDKIIMRSREEDILNKLNIIRG.

Residues His132, His136, and His142 each coordinate Zn(2+).

The protein belongs to the endoribonuclease YbeY family. Zn(2+) serves as cofactor.

It localises to the cytoplasm. Functionally, single strand-specific metallo-endoribonuclease involved in late-stage 70S ribosome quality control and in maturation of the 3' terminus of the 16S rRNA. In Clostridium beijerinckii (strain ATCC 51743 / NCIMB 8052) (Clostridium acetobutylicum), this protein is Endoribonuclease YbeY.